A 3828-amino-acid chain; its full sequence is Histone-lysine N-methyltransferase trithorax (3828 aa).

Disordered stretches follow at residues 25–179 (EDEA…AAAA), 356–390 (AVKS…ATKQ), and 512–589 (FRKQ…RSTR). The span at 29–57 (ASAAAAAAAATAATTEQHQQSEQSAGSSA) shows a compositional bias: low complexity. Residues 77–89 (AATSGNRGASSGA) show a composition bias toward polar residues. The span at 101–114 (GNGSSTGSKTTNGG) shows a compositional bias: low complexity. Positions 152-165 (DGTEDTNNDDDDDS) are enriched in acidic residues. Positions 359–387 (SSGSSPNPNHNPNAVAGSTSAAAPGAPTA) are enriched in low complexity. A compositionally biased stretch (basic and acidic residues) spans 513–523 (RKQEPQHKTPE). Acidic residues predominate over residues 524-553 (DNDDDGSASSDAIEDDEDIDDDDAEENEEA). Over residues 554-581 (ASEKSAETTASVDEKEADDRQLVMDKHF) the composition is skewed to basic and acidic residues. The nuclear receptor DNA-binding region spans 725–839 (ASTCAVCSAP…AGHRSRLSAI (115 aa)). 3 disordered regions span residues 933-1036 (ESKE…SAVP), 1075-1094 (ELAA…TTSP), and 1131-1170 (AQPA…TTRN). A compositionally biased stretch (basic and acidic residues) spans 960 to 974 (AKQDKEKARELEAEK). Low complexity-rich tracts occupy residues 998–1022 (ASTT…TNSS) and 1078–1094 (AAEA…TTSP). Residues 1140-1170 (ESRSSKSNTQTEAKKTPATSGSSKGKVTTRN) are compositionally biased toward polar residues. 3 PHD-type zinc fingers span residues 1251 to 1334 (RALC…CTVC), 1335 to 1380 (YTCN…CLKC), and 1408 to 1469 (GNFC…CARR). The region spanning 1483-1644 (AVMEEFKSSL…SEQFPWFQNE (162 aa)) is the Bromo domain. Residues 1708–1748 (TRVCLFCRKSGEGLSGEEARLLYCGHDCWVHINCAMWSAEV) form a C2HC pre-PHD-type zinc finger. A PHD-type 4 zinc finger spans residues 1769 to 1816 (IKCTVCGNRGATVGCNVKSCGEHYHYPCARTIDCAFLTDKSMYCPAHA). Residues 1856–1913 (KVQFHIGSVAVRQLGSIVPRFSDSFEAIVPINFLCSRLYWSSKEPWKIVEYTVRTTIQ) form the FYR N-terminal domain. Disordered regions lie at residues 2252 to 2272 (CEPM…AQLS), 2464 to 2510 (AHQK…QQQQ), 2826 to 2848 (RNTN…PQQS), 2897 to 2973 (RQQQ…SPAA), 2988 to 3031 (APAP…QLSM), 3117 to 3178 (ASAN…VPAG), 3314 to 3338 (NGSG…DDDD), and 3457 to 3487 (KLDV…PMRD). Composition is skewed to low complexity over residues 2253–2268 (EPMS…ATGT), 2483–2510 (QGQQ…QQQQ), and 2836–2848 (SVLS…PQQS). Residues 2897 to 2917 (RQQQANELKNKQAAGQQTGST) show a composition bias toward polar residues. Composition is skewed to low complexity over residues 2956 to 2973 (ATSA…SPAA), 2988 to 2997 (APAPQPQQQE), 3005 to 3031 (LHQQ…QLSM), and 3117 to 3132 (ASAN…QQNS). Residues 3148-3164 (QQRQEPTPLSNDVVVQS) are compositionally biased toward polar residues. Residues 3328–3338 (DDAEEDEDDDD) are compositionally biased toward acidic residues. The FYR C-terminal domain maps to 3493-3577 (GPHLLYEIQS…EKCVKYTPKY (85 aa)). In terms of domain architecture, SET spans 3690-3806 (DYVGVFRSHI…QGEELTYDYK (117 aa)). Residues histidine 3700, arginine 3702, tyrosine 3744, and 3767-3768 (NH) contribute to the S-adenosyl-L-methionine site. Zn(2+) is bound by residues cysteine 3770, cysteine 3816, cysteine 3818, and cysteine 3823. The 17-residue stretch at 3812-3828 (EKIPCSCGSKRCRKYLN) folds into the Post-SET domain.

The protein belongs to the class V-like SAM-binding methyltransferase superfamily. Histone-lysine methyltransferase family. TRX/MLL subfamily. Interacts with ash1 via its SET domain.

The protein resides in the nucleus. It carries out the reaction L-lysyl(9)-[histone H3] + 3 S-adenosyl-L-methionine = N(6),N(6),N(6)-trimethyl-L-lysyl(9)-[histone H3] + 3 S-adenosyl-L-homocysteine + 3 H(+). In terms of biological role, histone methyltransferase that methylates 'Lys-4' of histone H3 (H3K4me). H3K4me represents a specific tag for epigenetic transcriptional activation. Functions in segment determination through interaction with genes of bithorax (BX-C) and antennapedia (ANT-C) complexes. Acts as an activator of BX-C. Involved in the very early regulation of homeotic genes expressed only in the posterior region of the embryo. The protein is Histone-lysine N-methyltransferase trithorax (trx) of Drosophila virilis (Fruit fly).